We begin with the raw amino-acid sequence, 282 residues long: Sirohydrochlorin cobaltochelatase CbiKC (282 aa).

H166 (proton acceptor) is an active-site residue. Co(2+)-binding residues include H166 and H228.

The protein belongs to the CbiK family.

It is found in the cytoplasm. It catalyses the reaction Co-sirohydrochlorin + 2 H(+) = sirohydrochlorin + Co(2+). The enzyme catalyses siroheme + 2 H(+) = sirohydrochlorin + Fe(2+). It functions in the pathway cofactor biosynthesis; adenosylcobalamin biosynthesis; cob(II)yrinate a,c-diamide from sirohydrochlorin (anaerobic route): step 1/10. Its pathway is porphyrin-containing compound metabolism; siroheme biosynthesis; siroheme from sirohydrochlorin: step 1/1. Its function is as follows. Catalyzes the insertion of Co(2+) into sirohydrochlorin as part of the anaerobic pathway to cobalamin biosynthesis. To a lesser extent, is also able to insert Fe(2+) into sirohydrochlorin, yielding siroheme. This Nitratidesulfovibrio vulgaris (strain ATCC 29579 / DSM 644 / CCUG 34227 / NCIMB 8303 / VKM B-1760 / Hildenborough) (Desulfovibrio vulgaris) protein is Sirohydrochlorin cobaltochelatase CbiKC (cbiKc).